Reading from the N-terminus, the 140-residue chain is Nucleoside diphosphate kinase (140 aa).

Lysine 11, phenylalanine 59, arginine 87, threonine 93, arginine 104, and asparagine 114 together coordinate ATP. The active-site Pros-phosphohistidine intermediate is histidine 117.

It belongs to the NDK family. As to quaternary structure, homotetramer. It depends on Mg(2+) as a cofactor.

The protein localises to the cytoplasm. The catalysed reaction is a 2'-deoxyribonucleoside 5'-diphosphate + ATP = a 2'-deoxyribonucleoside 5'-triphosphate + ADP. It carries out the reaction a ribonucleoside 5'-diphosphate + ATP = a ribonucleoside 5'-triphosphate + ADP. Functionally, major role in the synthesis of nucleoside triphosphates other than ATP. The ATP gamma phosphate is transferred to the NDP beta phosphate via a ping-pong mechanism, using a phosphorylated active-site intermediate. In Rhodopseudomonas palustris (strain BisB18), this protein is Nucleoside diphosphate kinase.